Here is a 607-residue protein sequence, read N- to C-terminus: MNKEERAKRQSKIRNFSIIAHIDHGKSTLADRILEKTNALTQREMKAQLLDSMDLERERGITIKLNAIQLNYKAKDGEEYILHLIDTPGHVDFTYEVSRSLAACEGAILVVDAAQGIEAQTLANVYLALDNNLEILPVINKIDLPSADPERVRQEVEDVIGLDASEAVLASAKAGIGIEEILEQIVEKVPAPTGDSEEPLQCMIFDSLYDPYRGVIAYIRVVNGTVKVGDKVRMMATGKEFEVTEVGVFTPKTTQRDELTVGDVGFLAASIKNVGDTRVGDTITHAKRPAAEPLAGYRKLNPMVFCGLYPIDSARYNDLRDALEKLELNDSALEFEPETSQALGFGFRCGFLGLLHMEILQERIEREFKIDLITTAPSVIYKVFLTNGEDMIVDNPSNMPDPQTIDRVEEPFVKAAIMVPNDYVGAVMEICQGKRGTFIDMQYLDETRVTLTYEIPLSEIVYDFFDQLKSNTKGYASFDYELIGYKPSKLVKMDILLNSEQVDALSFIVHRDSAYDRGKVIVEKLKELIPRQQFEVPIQATIGNKVVARSTIKAMRKNVLAKCYGGDISRKRKLLDKQKEGKKRMKSVGSVEVPQEAFMAVLKMDDN.

A tr-type G domain is found at 11 to 193; sequence SKIRNFSIIA…QIVEKVPAPT (183 aa). Residues 23-28 and 140-143 contribute to the GTP site; these read DHGKST and NKID.

The protein belongs to the TRAFAC class translation factor GTPase superfamily. Classic translation factor GTPase family. LepA subfamily.

Its subcellular location is the cell membrane. The catalysed reaction is GTP + H2O = GDP + phosphate + H(+). Functionally, required for accurate and efficient protein synthesis under certain stress conditions. May act as a fidelity factor of the translation reaction, by catalyzing a one-codon backward translocation of tRNAs on improperly translocated ribosomes. Back-translocation proceeds from a post-translocation (POST) complex to a pre-translocation (PRE) complex, thus giving elongation factor G a second chance to translocate the tRNAs correctly. Binds to ribosomes in a GTP-dependent manner. The protein is Elongation factor 4 of Bacillus anthracis (strain A0248).